The primary structure comprises 433 residues: Polygalacturonase ADPG2 (433 aa).

A signal peptide spans 1-24 (MARCTNLVTVFLLWALLMFSWCKA). PbH1 repeat units lie at residues 223–249 (CSNV…HITN), 250–271 (TQNI…SIES), 273–293 (SQNV…SIGS), 303–324 (VSGV…RIKT), and 332–353 (ASNI…IIDQ). D264 functions as the Proton donor in the catalytic mechanism. H287 is an active-site residue.

This sequence belongs to the glycosyl hydrolase 28 family. As to expression, expressed in roots and in the abscission zone of the sepals, petals and stamens of flowers, at the base of cauline leaves and in the basal cell of trichomes from senescing leaves. Found at the site of lateral root emergence, in the dehiscence zone of anthers and maturing siliques. Also expressed early in anther development, at the time of microspore separation. Expressed in germinating seeds, at the point at which the radicle broke through the seed coat. Not expressed at the junction between the seed and the funiculus or in the dehiscence zone of anthers or pods.

It is found in the secreted. The protein localises to the cell wall. It carries out the reaction (1,4-alpha-D-galacturonosyl)n+m + H2O = (1,4-alpha-D-galacturonosyl)n + (1,4-alpha-D-galacturonosyl)m.. Polygalacturonase involved in cell separation in the final stages of pod shatter, in anther dehiscence and in floral organ abscission. The chain is Polygalacturonase ADPG2 (ADPG2) from Arabidopsis thaliana (Mouse-ear cress).